Reading from the N-terminus, the 257-residue chain is Pyridoxine 5'-phosphate synthase (257 aa).

N6 contributes to the 3-amino-2-oxopropyl phosphate binding site. 8–9 (DH) is a binding site for 1-deoxy-D-xylulose 5-phosphate. R17 contributes to the 3-amino-2-oxopropyl phosphate binding site. The active-site Proton acceptor is the H41. 1-deoxy-D-xylulose 5-phosphate contacts are provided by R43 and H48. E68 functions as the Proton acceptor in the catalytic mechanism. T98 contacts 1-deoxy-D-xylulose 5-phosphate. Catalysis depends on H210, which acts as the Proton donor. 3-amino-2-oxopropyl phosphate contacts are provided by residues G211 and 232 to 233 (GQ).

Belongs to the PNP synthase family. As to quaternary structure, homooctamer; tetramer of dimers.

Its subcellular location is the cytoplasm. The catalysed reaction is 3-amino-2-oxopropyl phosphate + 1-deoxy-D-xylulose 5-phosphate = pyridoxine 5'-phosphate + phosphate + 2 H2O + H(+). It participates in cofactor biosynthesis; pyridoxine 5'-phosphate biosynthesis; pyridoxine 5'-phosphate from D-erythrose 4-phosphate: step 5/5. Functionally, catalyzes the complicated ring closure reaction between the two acyclic compounds 1-deoxy-D-xylulose-5-phosphate (DXP) and 3-amino-2-oxopropyl phosphate (1-amino-acetone-3-phosphate or AAP) to form pyridoxine 5'-phosphate (PNP) and inorganic phosphate. The protein is Pyridoxine 5'-phosphate synthase of Campylobacter jejuni subsp. jejuni serotype O:6 (strain 81116 / NCTC 11828).